Reading from the N-terminus, the 589-residue chain is Ufm1-specific protease (589 aa).

Positions 1-22 are disordered; that stretch reads MTNSQTVSLIGPTQMAPQSTPP. Active-site residues include cysteine 421, aspartate 545, and histidine 547.

It belongs to the peptidase C78 family. In terms of assembly, interacts with odr-4. As to expression, expressed in head and tail neurons. Expressed in the amphid head neurons ADL, ASI, ASH, ASJ, ASG, ADF, ASK, AWA, AWB, AWC, and in two tail neurons, the phasmid tail neurons PHA and PHB.

The protein resides in the endoplasmic reticulum membrane. It is found in the cytoplasm. Its subcellular location is the perinuclear region. In terms of biological role, thiol protease which recognizes and hydrolyzes the peptide bond at the C-terminal Gly of ufm-1, a ubiquitin-like modifier protein bound to a number of target proteins. Required, with oct-4, for the localization of a subset of 7 transmembrane domain odorant receptors, including odr-10, to the cilia of olfactory neurons AWA and AWC. Operates in aggregation behavior, and responses to oxygen levels. The sequence is that of Ufm1-specific protease from Caenorhabditis elegans.